Here is a 262-residue protein sequence, read N- to C-terminus: Sepiapterin reductase (262 aa).

An N-acetylmethionine modification is found at M1. NADP(+)-binding positions include 15-21 and 43-44; these read GASRGFG and RS. A Phosphoserine modification is found at S46. Position 70–71 (70–71) interacts with NADP(+); that stretch reads DL. Residues 158 to 159 and Y171 each bind substrate; that span reads SL. K175 contacts NADP(+). Position 196 is a phosphoserine (S196). Substrate is bound at residue G200. 202 to 207 serves as a coordination point for NADP(+); the sequence is LDTDMQ. At S214 the chain carries Phosphoserine. D258 contacts substrate.

This sequence belongs to the sepiapterin reductase family. Homodimer.

The protein resides in the cytoplasm. The catalysed reaction is L-erythro-7,8-dihydrobiopterin + NADP(+) = L-sepiapterin + NADPH + H(+). It carries out the reaction (6R)-L-erythro-5,6,7,8-tetrahydrobiopterin + 2 NADP(+) = 6-pyruvoyl-5,6,7,8-tetrahydropterin + 2 NADPH + 2 H(+). It catalyses the reaction (S)-benzoin + NADP(+) = benzil + NADPH + H(+). Its function is as follows. Catalyzes the final one or two reductions in tetra-hydrobiopterin biosynthesis to form 5,6,7,8-tetrahydrobiopterin. The enzyme also catalyzes the reduction of benzil to (S)-benzoin. The sequence is that of Sepiapterin reductase (SPR) from Meriones unguiculatus (Mongolian jird).